The following is a 706-amino-acid chain: Fatty acid oxidation complex subunit alpha (706 aa).

The interval 1 to 188 (MDKSFTLNRL…KMGLVDDVVP (188 aa)) is enoyl-CoA hydratase. The tract at residues 308–706 (KAVNKVMVLG…MAESGSKFYE (399 aa)) is 3-hydroxyacyl-CoA dehydrogenase.

In the N-terminal section; belongs to the enoyl-CoA hydratase/isomerase family. It in the central section; belongs to the 3-hydroxyacyl-CoA dehydrogenase family. Heterotetramer of two alpha chains (FadJ) and two beta chains (FadI).

It localises to the cytoplasm. It catalyses the reaction a (3S)-3-hydroxyacyl-CoA = a (2E)-enoyl-CoA + H2O. The enzyme catalyses a 4-saturated-(3S)-3-hydroxyacyl-CoA = a (3E)-enoyl-CoA + H2O. The catalysed reaction is a (3S)-3-hydroxyacyl-CoA + NAD(+) = a 3-oxoacyl-CoA + NADH + H(+). It carries out the reaction (3S)-3-hydroxybutanoyl-CoA = (3R)-3-hydroxybutanoyl-CoA. It functions in the pathway lipid metabolism; fatty acid beta-oxidation. In terms of biological role, catalyzes the formation of a hydroxyacyl-CoA by addition of water on enoyl-CoA. Also exhibits 3-hydroxyacyl-CoA epimerase and 3-hydroxyacyl-CoA dehydrogenase activities. This Shewanella loihica (strain ATCC BAA-1088 / PV-4) protein is Fatty acid oxidation complex subunit alpha.